The sequence spans 629 residues: Methionine--tRNA ligase (629 aa).

Positions 10–20 match the 'HIGH' region motif; that stretch reads YYVNSEPHIGS. Positions 125, 128, 146, and 149 each coordinate Zn(2+). A 'KMSKS' region motif is present at residues 297-301; that stretch reads KISKS. Residue Lys300 participates in ATP binding. The region spanning 529-629 is the tRNA-binding domain; that stretch reads DFSKVDLRIA…GEITPGAKVS (101 aa).

This sequence belongs to the class-I aminoacyl-tRNA synthetase family. MetG type 2A subfamily. As to quaternary structure, homodimer. Zn(2+) is required as a cofactor.

Its subcellular location is the cytoplasm. It carries out the reaction tRNA(Met) + L-methionine + ATP = L-methionyl-tRNA(Met) + AMP + diphosphate. Functionally, is required not only for elongation of protein synthesis but also for the initiation of all mRNA translation through initiator tRNA(fMet) aminoacylation. This is Methionine--tRNA ligase (metG) from Thermotoga maritima (strain ATCC 43589 / DSM 3109 / JCM 10099 / NBRC 100826 / MSB8).